We begin with the raw amino-acid sequence, 301 residues long: Probable alpha-L-glutamate ligase (301 aa).

Residues 104 to 287 enclose the ATP-grasp domain; sequence LQLLSRRGIG…VAGMIIEHLE (184 aa). ATP-binding positions include Lys-141, 178–179, Asp-187, and 211–213; these read EY and RSN. Residues Asp-248, Glu-260, and Asn-262 each contribute to the Mg(2+) site. Mn(2+)-binding residues include Asp-248, Glu-260, and Asn-262.

This sequence belongs to the RimK family. Mg(2+) is required as a cofactor. Mn(2+) serves as cofactor.

This chain is Probable alpha-L-glutamate ligase, found in Pseudomonas putida (strain ATCC 700007 / DSM 6899 / JCM 31910 / BCRC 17059 / LMG 24140 / F1).